The chain runs to 705 residues: Translation initiation factor IF-2 (705 aa).

Residues 40-124 (DDQIKALDKK…QPAAPKEIPS (85 aa)) are disordered. The span at 41 to 58 (DQIKALDKKFKKEQKNDN) shows a compositional bias: basic and acidic residues. A compositionally biased stretch (low complexity) spans 59 to 77 (KQSTQNNHQKSNNQNQNKG). Residues 94-108 (KGNKKNNRNNKKNNK) show a composition bias toward basic residues. One can recognise a tr-type G domain in the interval 207-376 (ERPAVVTIMG…GLVAEVQELK (170 aa)). Residues 216–223 (GHVDHGKT) form a G1 region. 216–223 (GHVDHGKT) lines the GTP pocket. The tract at residues 241–245 (GITQH) is G2. A G3 region spans residues 262–265 (DTPG). GTP is bound by residues 262–266 (DTPGH) and 316–319 (NKID). Positions 316-319 (NKID) are G4. Residues 352–354 (SAL) form a G5 region.

It belongs to the TRAFAC class translation factor GTPase superfamily. Classic translation factor GTPase family. IF-2 subfamily.

It localises to the cytoplasm. One of the essential components for the initiation of protein synthesis. Protects formylmethionyl-tRNA from spontaneous hydrolysis and promotes its binding to the 30S ribosomal subunits. Also involved in the hydrolysis of GTP during the formation of the 70S ribosomal complex. The polypeptide is Translation initiation factor IF-2 (Staphylococcus aureus (strain MSSA476)).